The primary structure comprises 512 residues: MENSGLLALPLNAATIVPEGAILLALLSSLLVDLAGEKTASRWVPPICYAGLGSALILLASQWNSTLSPSFLGAFLADNLAIAFRAIIATSTLFSLMISWRYVERSGAPMGEYAAILLAATLGAMFLCGSTDLVSIFVSLETLSVSSYLLAGYMKQDARSSEAALKYLLVGSATAAVFLYGASLLYGLTGGSTNLDAVALALQSSDTPVAALALVFVLATVAFKIAAVPFHQWTPDVYEGAPTPIVAFLSVGSKTAGFALALRLLVGCFESFDIQWKFLFSLLAILSMVLGNIVALSQTSMKRMLAYSSIGQAGFVMIGLVCGTEDGFAAMILYLATYLFMNMGAFACVILFSIRTGSDLIADYAGLYQKDPLVTIGLSLCLLSLGGIPPMLGFFGKIYLFFAGWADHQYLLVVTGLITSVVSIYYYISVIRMMVVIEPKEASDVVKSYAAVNWNIPGLNPLRVALLVCVIVTGIGGIFSNPLFQWANSAVAGTPILQKVIVTALGTTGTIS.

14 consecutive transmembrane segments (helical) span residues Leu6–Leu26, Trp43–Trp63, Leu80–Trp100, Gly107–Leu127, Leu133–Tyr153, Leu168–Leu188, Ala210–Phe230, Pro242–Leu262, Trp276–Leu296, Met304–Thr324, Ile332–Phe352, Ile376–Gly396, Leu411–Ile431, and Val464–Phe484.

It belongs to the complex I subunit 2 family. NDH-1 can be composed of about 15 different subunits; different subcomplexes with different compositions have been identified which probably have different functions.

Its subcellular location is the plastid. It is found in the organellar chromatophore thylakoid membrane. It catalyses the reaction a plastoquinone + NADH + (n+1) H(+)(in) = a plastoquinol + NAD(+) + n H(+)(out). The enzyme catalyses a plastoquinone + NADPH + (n+1) H(+)(in) = a plastoquinol + NADP(+) + n H(+)(out). Functionally, NDH-1 shuttles electrons from an unknown electron donor, via FMN and iron-sulfur (Fe-S) centers, to quinones in the respiratory and/or the photosynthetic chain. The immediate electron acceptor for the enzyme in this species is believed to be plastoquinone. Couples the redox reaction to proton translocation, and thus conserves the redox energy in a proton gradient. Cyanobacterial NDH-1 also plays a role in inorganic carbon-concentration. The sequence is that of NAD(P)H-quinone oxidoreductase subunit 2, organellar chromatophore from Paulinella chromatophora.